Here is a 313-residue protein sequence, read N- to C-terminus: UPF0761 membrane protein VS_0126 (313 aa).

6 helical membrane passes run 41–61, 104–124, 139–159, 185–205, 217–237, and 249–269; these read YLAYITLLSIVPMLTVLLSIL, MTAVGSVFLFIAALMLISNID, AVLSFSMYWMVLTLGPILIGA, VIRKLPLITSFFAFFGLYLLV, AGSLVAALLFELSKKGFAAYI, and ALAAIPILFVWVYLCWLIVLV. The segment covering 281–290 has biased composition (polar residues); it reads EQWSDSQEMV. Residues 281–313 form a disordered region; it reads EQWSDSQEMVHSSDKDKITEQGNNSDSTDPESK.

This sequence belongs to the UPF0761 family.

The protein localises to the cell inner membrane. The protein is UPF0761 membrane protein VS_0126 of Vibrio atlanticus (strain LGP32) (Vibrio splendidus (strain Mel32)).